We begin with the raw amino-acid sequence, 270 residues long: Chromo domain-containing protein cec-4 (270 aa).

Disordered regions lie at residues 1–24 (MAKK…ETSK) and 143–229 (KIAQ…KNDV). In terms of domain architecture, Chromo spans 87–147 (YAVERVLAHR…HQEDLKIAQT (61 aa)). Composition is skewed to basic residues over residues 151–167 (TPSK…KRRA) and 187–197 (TPKQSTKKLKR). The span at 205–229 (LVEKSKKKAIPDLENHTLDQEKNDV) shows a compositional bias: basic and acidic residues.

Interacts with mono-, di- and tri-methylated 'Lys-9' residues on histone H3. Weakly interacts with methylated 'Lys-37' residues on histone H3.

The protein localises to the nucleus inner membrane. Its subcellular location is the membrane. Chromatin anchor protein which binds to methylated lysine residues on histone H3, thereby recruiting heterochromatin to the nuclear periphery, especially in embryonic cells, with a lesser role in differentiated cells. May be required for the correct positioning of chromatin and nucleoli in embryos. This chain is Chromo domain-containing protein cec-4, found in Caenorhabditis elegans.